Reading from the N-terminus, the 159-residue chain is Transcription elongation factor A protein-like 1 (159 aa).

A disordered region spans residues Met1–Glu99. Residues Lys17–Leu34 show a composition bias toward basic and acidic residues. Positions Gln37 to Leu54 are enriched in acidic residues. The segment covering Ser64–Glu80 has biased composition (basic and acidic residues).

This sequence belongs to the TFS-II family. TFA subfamily.

The protein resides in the nucleus. In terms of biological role, may be involved in transcriptional regulation. Modulates various viral and cellular promoters in a promoter context-dependent manner. Does not bind DNA directly. In Ateles geoffroyi (Black-handed spider monkey), this protein is Transcription elongation factor A protein-like 1.